Reading from the N-terminus, the 132-residue chain is Mercuric resistance operon regulatory protein (132 aa).

The HTH merR-type domain occupies 2 to 71; the sequence is KFRIGELADK…LNEIDKLLGV (70 aa). The H-T-H motif DNA-binding region spans 5-24; the sequence is IGELADKCGVNKETIRYYER. Hg(2+)-binding residues include C79, C114, and C123.

In terms of assembly, homodimer.

Functionally, mediates the mercuric-dependent induction of mercury resistance operon. In the absence of mercury MerR represses transcription by binding tightly to the mer operator region; when mercury is present the dimeric complex binds a single ion and becomes a potent transcriptional activator, while remaining bound to the mer site. This is Mercuric resistance operon regulatory protein (merR1) from Bacillus cereus.